The chain runs to 204 residues: Probable nicotinate-nucleotide adenylyltransferase (204 aa).

It belongs to the NadD family.

The catalysed reaction is nicotinate beta-D-ribonucleotide + ATP + H(+) = deamido-NAD(+) + diphosphate. The protein operates within cofactor biosynthesis; NAD(+) biosynthesis; deamido-NAD(+) from nicotinate D-ribonucleotide: step 1/1. In terms of biological role, catalyzes the reversible adenylation of nicotinate mononucleotide (NaMN) to nicotinic acid adenine dinucleotide (NaAD). This is Probable nicotinate-nucleotide adenylyltransferase from Dehalococcoides mccartyi (strain ATCC BAA-2100 / JCM 16839 / KCTC 5957 / BAV1).